A 487-amino-acid polypeptide reads, in one-letter code: MRFHRQGISAIIGVLLIVLLGFCWKLSGSYGIVSTALPHNQSAIKSTDLPSIRWDNYHEFVRDIDFDNSTAIFNSIRAALRQSPSDIHPVGVSYFPAVIPKGTLMYHAGSKVPTTFEWLAMDHEFSYSFGLRSPSYGRKSLERRHGRFGNGTNGDHPKGPPPPPPPPDEKGRGSQKMLTYRAARDLNKFLYLDGASAAKTDSGEMDTQLMLSNVIKEKLNLTDDGENERMAERLYAARICKWGKPFGLDGIIRVEVGFEVVLCDFSADNVELVSMLEMVQPNQYLGLPAPTVISKEEGWPLDENGSLVEDQLTDDQKAILEREDGWEKAFSNFNAVKSFNQLRAGAAHDNGEHRIHIDYRYLVSGINRTYIAPDPNNRRLLDEGMTWEKQLDMVDDLEKALEVGFDATQSMDWQLAFDELVLKFAPLLKSVSNILNSDGDINESIAINATALTLNFCLPICEPIPGLKNGCRLFDLVICCQRCRRNC.

The N-terminal stretch at 1-31 is a signal peptide; sequence MRFHRQGISAIIGVLLIVLLGFCWKLSGSYG. Asn-40, Asn-68, Asn-150, Asn-220, Asn-304, Asn-367, Asn-442, and Asn-448 each carry an N-linked (GlcNAc...) asparagine glycan. A disordered region spans residues 141–176; sequence LERRHGRFGNGTNGDHPKGPPPPPPPPDEKGRGSQK.

In terms of processing, N-glycosylated.

This is an uncharacterized protein from Saccharomyces cerevisiae (strain ATCC 204508 / S288c) (Baker's yeast).